A 119-amino-acid chain; its full sequence is MAVFLLATSTIMFPTKIEAADCNGACSPFEVPPCRSRDCRCVPIGLFVGFCIHPTGLSSVAKMIDEHPNLCQSDDECMKKGSGNFCARYPNNYIDYGWCFDSDSEALKGFLAMPRATTK.

The signal sequence occupies residues 1–19 (MAVFLLATSTIMFPTKIEA). Cystine bridges form between Cys22/Cys39, Cys26/Cys41, and Cys34/Cys51. 2 consecutive propeptides follow at residues 57-64 (LSSVAKMI) and 117-119 (TTK).

The C-terminal glycine may be removed from A1b.

Functionally, A1b binds to basic 7S globulin (BG) and stimulates its phosphorylation activity. Involved in the signal transduction system to regulate the growth and differentiation as a hormone peptide. The protein is Albumin-1 of Glycine max (Soybean).